A 287-amino-acid polypeptide reads, in one-letter code: Protease HtpX (287 aa).

The next 2 helical transmembrane spans lie at 4-24 (IFLLIATNFAILLVASIVMSI) and 33-53 (GGLLVFAAIFGFGGSFISLAI). Histidine 139 lines the Zn(2+) pocket. Residue glutamate 140 is part of the active site. Residue histidine 143 participates in Zn(2+) binding. The next 2 membrane-spanning stretches (helical) occupy residues 154–174 (LIQGVVNTFVIFAARVVAGII) and 195–215 (AVVFVLDMLFGILASMIVAYF). A Zn(2+)-binding site is contributed by glutamate 220.

Belongs to the peptidase M48B family. Zn(2+) is required as a cofactor.

The protein resides in the cell inner membrane. In Shewanella frigidimarina (strain NCIMB 400), this protein is Protease HtpX.